The following is a 2255-amino-acid chain: Non-reducing polyketide synthase nvfA (2255 aa).

The interval Ile13–Glu251 is N-terminal acylcarrier protein transacylase domain (SAT). The region spanning Val365–Gln781 is the Ketosynthase family 3 (KS3) domain. Residues Cys530, His665, and His704 each act as for beta-ketoacyl synthase activity in the active site. The segment at Leu887–Ala1187 is malonyl-CoA:ACP transacylase (MAT) domain. The active-site For acyl/malonyl transferase activity is the Ser974. Residues Glu1229–Ser1357 are N-terminal hotdog fold. In terms of domain architecture, PKS/mFAS DH spans Glu1229–Thr1536. Residues Gly1232 to Leu1535 form a product template (PT) domain region. His1262 (proton acceptor; for dehydratase activity) is an active-site residue. The C-terminal hotdog fold stretch occupies residues Ser1385–Thr1536. Residue Asp1443 is the Proton donor; for dehydratase activity of the active site. A Carrier domain is found at Thr1581–Ala1655. Ser1615 is subject to O-(pantetheine 4'-phosphoryl)serine. The methyltransferase (CMeT) domain stretch occupies residues His1809 to Asn2042. The interval Leu2109 to Tyr2227 is thioesterase (TE) domain. Catalysis depends on Ser2194, which acts as the For thioesterase activity.

The enzyme catalyses 3 malonyl-CoA + acetyl-CoA + 2 S-adenosyl-L-methionine = 3,5-dimethylorsellinate + 2 S-adenosyl-L-homocysteine + 3 CO2 + 4 CoA. It participates in secondary metabolite biosynthesis; terpenoid biosynthesis. In terms of biological role, non-reducing polyketide synthase; part of the gene cluster that mediates the biosynthesis of novofumigatonin, a heavily oxygenated meroterpenoid containing a unique orthoester moiety. The first step of the pathway is the synthesis of 3,5-dimethylorsellinic acid (DMOA) by the polyketide synthase nvfA via condensation of one acetyl-CoA starter unit with 3 malonyl-CoA units and 2 methylations. DMOA is then converted to farnesyl-DMOA by the farnesyltransferase nvfB. Epoxydation by FAD-dependent monooxygenase nvfK, followed by a protonation-initiated cyclization catalyzed by the terpene cyclase nvfL leads to the production of asnavolin H. The short chain dehydrogenase nvfC then as a 3-OH dehydrogenase of asnovolin H to yield chemesin D. There are two branches to synthesize asnovolin A from chemesin D. In one branch, chemesin D undergoes Baeyer-Villiger oxidation by nvfH, methylation by nvfJ, and enoyl reduction by the nvfM D enoylreductase that reduces the double bond between C-5'and C-6', to form respectively asnovolin I, asnovolin K, and asnovolin A. In the other branch, the methylation precedes the Baeyer-Villiger oxidation and the enoyl reduction to yield asnovolin A via the asnovolin J intermediate. Asnovolin A is further converted to fumigatonoid A by the Fe(II)/2-oxoglutarate-dependent dioxygenase nvfI that catalyzes an endoperoxidation reaction. The alpha/beta hydrolase nvfD then acts as an epimerase that converts fumigatonoid A to its C-5' epimer, which then undergoes spontaneous or nvfD-catalyzed lactonization. The following step utilizes the ketoreductase nvfG to produce fumigatonoid B. The dioxygenase nvfE further converts fumigatonoid B into fumigatonoid C. Finally the Fe(II)/2-oxoglutarate-dependent dioxygenase nvfF catalyzes two rounds of oxidation to transform fumigatonoid C into the end product, novofumigatonin A. The sequence is that of Non-reducing polyketide synthase nvfA from Aspergillus novofumigatus (strain IBT 16806).